Consider the following 1053-residue polypeptide: Integrin alpha-3 (1053 aa).

The first 32 residues, 1–32 (MGPGPCRVPRAPGWLLRALALMVAACGRVAFA), serve as a signal peptide directing secretion. At 33–993 (FNLDTRFLVV…LVEELPAEIE (961 aa)) the chain is on the extracellular side. FG-GAP repeat units lie at residues 38–103 (RFLV…KDDC), 110–171 (EKSD…DLQL), 185–235 (CNSN…WDLS), 236–293 (EYSY…GGDL), 294–355 (QRKQ…ASFP), 357–412 (QPSL…GLLR), and 416–478 (QIIH…VARP). N-linked (GlcNAc...) asparagine glycosylation is present at asparagine 86. Disulfide bonds link cysteine 94/cysteine 103, cysteine 140/cysteine 162, and cysteine 185/cysteine 197. Disulfide bonds link cysteine 486-cysteine 491 and cysteine 497-cysteine 551. N-linked (GlcNAc...) asparagine glycans are attached at residues asparagine 501, asparagine 512, asparagine 574, and asparagine 606. Residues cysteine 616 and cysteine 622 are joined by a disulfide bond. Residues asparagine 657, asparagine 699, asparagine 843, and asparagine 859 are each glycosylated (N-linked (GlcNAc...) asparagine). Cysteine 695 and cysteine 704 are oxidised to a cystine. 2 disulfides stabilise this stretch: cysteine 848–cysteine 906 and cysteine 913–cysteine 918. A disordered region spans residues 865–890 (PGVTPLSPQRRRRQLDPGGDQSSPPV). N-linked (GlcNAc...) asparagine glycans are attached at residues asparagine 925, asparagine 928, asparagine 937, and asparagine 971. Residues 994-1021 (LWLVLVAVGAGLLLLGLIILLLWKCGFF) form a helical membrane-spanning segment. Cysteine 1018 is lipidated: S-palmitoyl cysteine. The Cytoplasmic portion of the chain corresponds to 1022–1053 (KRARTRALYEAKRQKAEMKSQPSETERLTDDY).

This sequence belongs to the integrin alpha chain family. In terms of assembly, heterodimer of an alpha and a beta subunit. The alpha subunit is composed of a heavy and a light chain linked by a disulfide bond. Alpha-3 associates with beta-1. Interacts with HPS5. Interacts with FAP (seprase); the interaction occurs at the cell surface of invadopodia membrane in a collagen-dependent manner. As to expression, isoform 1 and isoform 2 are expressed in heart and brain. Only isoform 1 is detected in lung.

It is found in the cell membrane. The protein resides in the cell projection. The protein localises to the invadopodium membrane. Its subcellular location is the filopodium membrane. Functionally, integrin alpha-3/beta-1 is a receptor for fibronectin, laminin, collagen, epiligrin, thrombospondin and CSPG4. Integrin alpha-3/beta-1 provides a docking site for FAP (seprase) at invadopodia plasma membranes in a collagen-dependent manner and hence may participate in the adhesion, formation of invadopodia and matrix degradation processes, promoting cell invasion. Alpha-3/beta-1 may mediate with LGALS3 the stimulation by CSPG4 of endothelial cells migration. This Mus musculus (Mouse) protein is Integrin alpha-3 (Itga3).